A 242-amino-acid polypeptide reads, in one-letter code: Dickkopf-like protein 1 (242 aa).

The first 30 residues, 1 to 30, serve as a signal peptide directing secretion; sequence MGEASPPAPARRHLLVLLLLLSTLVIPSAA. 2 N-linked (GlcNAc...) asparagine glycosylation sites follow: Asn97 and Asn112.

Interacts with SLXL1; Co-localize in seminiferous tubules. Interacts with SLY. In terms of processing, N-glycosylated during spermatogenesis. Not N-glycosylated in mature sperm. More highly expressed in adult testis than in fetal testis. Exclusively expressed in the testis (at protein level). Intense expression in stages II, III and IV of spermatogenesis, whereas expression is lower in stage I.

Its subcellular location is the secreted. The protein resides in the cytoplasmic vesicle. The protein localises to the secretory vesicle. It localises to the acrosome. Involved in fertilization by facilitating sperm penetration of the zona pellucida. May promote spermatocyte apoptosis, thereby limiting sperm production. In adults, may reduce testosterone synthesis in Leydig cells. Is not essential either for development or fertility. This is Dickkopf-like protein 1 from Homo sapiens (Human).